The chain runs to 293 residues: Single-pass membrane and coiled-coil domain-containing protein 2 (293 aa).

Residues 116 to 188 adopt a coiled-coil conformation; that stretch reads KNLLEFLLKD…SAKLRMYQME (73 aa). A helical membrane pass occupies residues 234 to 254; the sequence is IFIMFYVLTVTGLLCYILFFG.

It is found in the membrane. The chain is Single-pass membrane and coiled-coil domain-containing protein 2 (SMCO2) from Macaca fascicularis (Crab-eating macaque).